The primary structure comprises 663 residues: Ankyrin repeat and SAM domain-containing protein 3 (663 aa).

Residues Met-1 to Ser-421 form an interaction with NEK7 region. Phosphoserine occurs at positions 2 and 5. 6 ANK repeats span residues Asp-34–Lys-64, Gly-68–Val-97, Glu-101–Met-130, Gln-134–Val-163, Tyr-168–Thr-197, and Ser-201–Leu-220. Asn-96 carries the post-translational modification 3-hydroxyasparagine. Phosphoserine occurs at positions 201, 225, 243, 244, and 245. 2 disordered regions span residues Leu-242–Lys-261 and Thr-278–Gly-425. Thr-318 is modified (phosphothreonine). The residue at position 319 (Ser-319) is a Phosphoserine. Over residues Asn-322–Pro-337 the composition is skewed to basic and acidic residues. Residues Ser-366, Ser-369, and Ser-373 each carry the phosphoserine modification. Residues Lys-378–His-395 are compositionally biased toward basic residues. Residues Ser-424 to Ser-487 enclose the SAM domain. Residues Ala-500–Ala-575 adopt a coiled-coil conformation. Ser-540 carries the phosphoserine modification. 2 disordered regions span residues Lys-585–Ser-604 and Ala-637–Gly-663. Residues Glu-641 to Glu-651 are compositionally biased toward acidic residues. Residues Ile-654–Gly-663 are compositionally biased toward basic and acidic residues.

As to quaternary structure, homooligomer. Interacts (via SAM domain) with ANKS6 (via SAM domain). Interacts with BICC1. Interacts with NPHP1. Interacts with NEK8. Interacts with HIF1AN. Interacts with NEK7; this interaction alters the subcellular distribution of NEK7 by preventing its nuclear translocation. Post-translationally, hydroxylated at Asn-96, most probably by HIF1AN. Phosphorylations at Ser-5, Ser-225, Thr-318, Ser-319, Ser-366 and Ser-369 occur in a NEK7-dependent manner. In terms of processing, polyubiquitinated.

Its subcellular location is the cell projection. The protein resides in the cilium. The protein localises to the cytoplasm. Its function is as follows. May be involved in vasopressin signaling in the kidney. The chain is Ankyrin repeat and SAM domain-containing protein 3 (Anks3) from Rattus norvegicus (Rat).